The following is a 217-amino-acid chain: Translation initiation factor IF-3 (217 aa).

The protein belongs to the IF-3 family. Monomer.

The protein resides in the cytoplasm. IF-3 binds to the 30S ribosomal subunit and shifts the equilibrium between 70S ribosomes and their 50S and 30S subunits in favor of the free subunits, thus enhancing the availability of 30S subunits on which protein synthesis initiation begins. The polypeptide is Translation initiation factor IF-3 (Synechococcus sp. (strain CC9902)).